Here is a 96-residue protein sequence, read N- to C-terminus: ESAT-6-like protein SAG1039 (96 aa).

This sequence belongs to the WXG100 family. sagEsxA-like subfamily. In terms of assembly, homodimer.

This chain is ESAT-6-like protein SAG1039, found in Streptococcus agalactiae serotype V (strain ATCC BAA-611 / 2603 V/R).